The following is a 206-amino-acid chain: MLSAQLEAYLAEINLPATAEQKKQLLDFVGMLNKWNKAYNLTSVRDPEAMLVRHIMDSLVVSPHLQGERFIDVGTGPGLPGIPLAIMNPDKTFVLLDSLGKRIRFQKQVAFELGIHNISSIESRVEAYQPEQKFDGVLSRAFASIHDMLTWCHHLPAEHGQFYALKGQLSDEEMQQIPAGFVVTETIELKVPRLDEQRHLLKIIKE.

S-adenosyl-L-methionine contacts are provided by residues Gly74, Leu79, 125–126, and Arg140; that span reads VE.

Belongs to the methyltransferase superfamily. RNA methyltransferase RsmG family.

The protein localises to the cytoplasm. It carries out the reaction guanosine(527) in 16S rRNA + S-adenosyl-L-methionine = N(7)-methylguanosine(527) in 16S rRNA + S-adenosyl-L-homocysteine. Specifically methylates the N7 position of guanine in position 527 of 16S rRNA. This Shewanella sp. (strain MR-4) protein is Ribosomal RNA small subunit methyltransferase G.